Here is a 178-residue protein sequence, read N- to C-terminus: Large ribosomal subunit protein bL17 (178 aa).

Low complexity-rich tracts occupy residues 123 to 139 and 151 to 160; these read KAPA…NTAT and EDAAAQAPVA. The disordered stretch occupies residues 123–178; it reads KAPASAADAKAQINTATEAKEAEPEAPAEDAAAQAPVADEQKAAEVDEKAEEKPEA. The span at 161–178 shows a compositional bias: basic and acidic residues; the sequence is DEQKAAEVDEKAEEKPEA.

The protein belongs to the bacterial ribosomal protein bL17 family. Part of the 50S ribosomal subunit. Contacts protein L32.

This is Large ribosomal subunit protein bL17 from Cutibacterium acnes (strain DSM 16379 / KPA171202) (Propionibacterium acnes).